The sequence spans 84 residues: Defensin-like protein 199 (84 aa).

A signal peptide spans 1–24 (MAITMRTLVAFVFTIFFIISFVHS). 4 disulfides stabilise this stretch: C40/C80, C47/C72, C56/C78, and C60/C79.

The protein belongs to the DEFL family.

The protein localises to the secreted. The polypeptide is Defensin-like protein 199 (Arabidopsis thaliana (Mouse-ear cress)).